Here is a 1036-residue protein sequence, read N- to C-terminus: Potassium-transporting ATPase alpha chain 2 (1036 aa).

The disordered stretch occupies residues 1–50 (MRRKTEIYSVELNGTKDVKPADQRDDKKFKGAKNKDLEPNKSHEKEELKK). Residues 1-99 (MRRKTEIYSV…PNTLTPPKQT (99 aa)) lie on the Cytoplasmic side of the membrane. Positions 14-50 (GTKDVKPADQRDDKKFKGAKNKDLEPNKSHEKEELKK) are enriched in basic and acidic residues. A helical membrane pass occupies residues 100–120 (PEIIKFLKQMVGGFSILLWIG). Residues 121-143 (AALCWIAFVIQYVNNSASLDNVY) are Lumenal-facing. The chain crosses the membrane as a helical span at residues 144–164 (LGAILVLVVILTGIFAYYQEA). Residues 165–300 (KSTNIMASFS…SEKTPIAIEI (136 aa)) are Cytoplasmic-facing. The chain crosses the membrane as a helical span at residues 301–320 (EHFVHIVAGVAVSIDIIFFI). At 321–332 (TAVCMKYYVLDA) the chain is on the lumenal side. A helical transmembrane segment spans residues 333–350 (IIFLISIIVANVPEGLLA). Residues 351–784 (TVTVTLSLTA…EEGRLIFDNL (434 aa)) lie on the Cytoplasmic side of the membrane. Residue aspartate 388 is the 4-aspartylphosphate intermediate of the active site. The Mg(2+) site is built by aspartate 729 and aspartate 733. Residues 785 to 804 (KKTIAYTLTKNIAELCPFLI) traverse the membrane as a helical segment. At 805-814 (YIVAGLPLPI) the chain is on the lumenal side. A helical membrane pass occupies residues 815-835 (GTITILFIDLGTDIIPSIALA). The Cytoplasmic portion of the chain corresponds to 836–855 (YEKAESDIMNRKPRHKKKDR). The chain crosses the membrane as a helical span at residues 856–878 (LVNTQLAIYSYLHIGLMQALGGF). Topologically, residues 879-930 (LVYFTVYAQQGFWPTSLINLRVAWETDDINDLEDSYGQEWTRYQRKYLEWTG) are lumenal. The helical transmembrane segment at 931–950 (STAFFVAIMIQQIADLIIRK) threads the bilayer. The Cytoplasmic segment spans residues 951-964 (TRRNSIFQQGLFRN). Serine 955 is subject to Phosphoserine; by PKA. A helical membrane pass occupies residues 965–983 (KVIWVGIASQVIVALILSY). Residues 984–998 (GLGSVPALSFTMLRV) are Lumenal-facing. Residues 999-1019 (QYWFVAVPHAILIWVYDEMRK) form a helical membrane-spanning segment. Residues 1020–1036 (LFIRLYPGSWWDKNMYY) are Cytoplasmic-facing.

It belongs to the cation transport ATPase (P-type) (TC 3.A.3) family. Type IIC subfamily. In terms of assembly, the ATPase pump is composed of a catalytic alpha subunit and an auxiliary non-catalytic beta subunit. The alpha subunit pairs with the beta subunit of gastric H(+)/K(+) ATPase ATP4B or the beta subunit of Na(+)/K(+) ATPases ATP1B1 and ATP1B3; this interaction is required for the formation of a functionally active pump and its targeting at the plasma membrane. In terms of tissue distribution, expressed at high levels in distal colon, coagulating and preputial glands; at much lower levels in proximal colon, kidney, uterus, brain, placenta and lung; and at trace levels in heart and forestomach. Expressed in distal colon epithelium (at protein level). Expressed in anterior prostate (at protein level).

The protein localises to the apical cell membrane. The catalysed reaction is K(+)(out) + ATP + H2O + H(+)(in) = K(+)(in) + ADP + phosphate + 2 H(+)(out). It carries out the reaction K(+)(out) + Na(+)(in) + ATP + H2O = K(+)(in) + Na(+)(out) + ADP + phosphate + H(+). With respect to regulation, up-regulated by K(+) ions in a dose-dependent way. Functionally, the catalytic subunit of a H(+)/K(+) ATPase and/or Na(+)/K(+) ATPase pump which transports K(+) ions in exchange for Na(+) and/or H(+) ions across the apical membrane of epithelial cells. Uses ATP as an energy source to pump K(+) ions into the cell while transporting Na(+) and/or H(+) ions to the extracellular compartment. Involved in the maintenance of electrolyte homeostasis through K(+) ion absorption in kidney and colon. In the airway epithelium, may play a primary role in mucus acidification regulating its viscosity and clearance. This Rattus norvegicus (Rat) protein is Potassium-transporting ATPase alpha chain 2 (Atp12a).